Reading from the N-terminus, the 731-residue chain is Gelsolin (731 aa).

The tract at residues 2–125 (VVEHPEFLKA…YKKGGVASGF (124 aa)) is actin-severing. Residues 25–107 (FDLVPVPPNL…VQGFESATFL (83 aa)) form a Gelsolin-like 1 repeat. Position 35 is a phosphotyrosine (Tyr35). Ca(2+) contacts are provided by Gly41, Asp42, Glu73, Asp85, Gly90, and Ala92. Positions 72–75 (DESG) are actin-actin interfilament contact point. 111 to 118 (KSGLKYKK) lines the a 1,2-diacyl-sn-glycero-3-phospho-(1D-myo-inositol-4,5-bisphosphate) pocket. Val121 serves as a coordination point for Ca(2+). 137-145 (RLLQVKGRR) lines the a 1,2-diacyl-sn-glycero-3-phospho-(1D-myo-inositol-4,5-bisphosphate) pocket. The Gelsolin-like 2 repeat unit spans residues 147–219 (VRATEVPVSW…FEEGAEPEAM (73 aa)). Ca(2+) contacts are provided by Gly162 and Asp163. A disulfide bridge connects residues Cys164 and Cys177. Ca(2+) is bound by residues Glu185, Asp235, Glu278, Asp279, and Glu303. Residues 266–338 (DENPFAQGAL…LPEGGETPLF (73 aa)) form a Gelsolin-like 3 repeat. Residues Tyr358 and Tyr414 each carry the phosphotyrosine modification. The actin-binding, Ca-sensitive stretch occupies residues 383–731 (AAQHGMDDDG…LDRALAELAA (349 aa)). One copy of the Gelsolin-like 4 repeat lies at 404-485 (SNKVPVDPAT…VQGKEPAHLM (82 aa)). Positions 420, 421, 451, 463, 468, 470, and 500 each coordinate Ca(2+). At Lys533 the chain carries N6-acetyllysine. One copy of the Gelsolin-like 5 repeat lies at 533-591 (KAGALNSNDAFVLKTPSAAYLWVGAGASEAEKTGAQELLRVLRAQPVQVAEGSEPDSFW). Positions 540 and 541 each coordinate Ca(2+). Tyr552 is subject to Phosphotyrosine. Glu563 serves as a coordination point for Ca(2+). Tyr600 is modified (phosphotyrosine). The Gelsolin-like 6 repeat unit spans residues 630 to 705 (IEEVPGEFMQ…VKQGFEPPSF (76 aa)). Positions 645, 646, and 668 each coordinate Ca(2+). Thr691 carries the phosphothreonine modification.

Belongs to the villin/gelsolin family. In terms of assembly, binds to actin and to fibronectin. Identified in a complex composed of ACTA1, COBL, GSN and TMSB4X. Interacts with the inactive form of EIF2AK2/PKR. Interacts with FLII.

The protein localises to the cytoplasm. Its subcellular location is the cytoskeleton. In terms of biological role, calcium-regulated, actin-modulating protein that binds to the plus (or barbed) ends of actin monomers or filaments, preventing monomer exchange (end-blocking or capping). It can promote the assembly of monomers into filaments (nucleation) as well as sever filaments already formed. Plays a role in ciliogenesis. This is Gelsolin (GSN) from Equus caballus (Horse).